Reading from the N-terminus, the 1026-residue chain is Multidrug resistance protein MdtC (1026 aa).

Helical transmembrane passes span 15 to 35 (ILIA…LPVA), 333 to 353 (EVEE…FLFL), 360 to 380 (LIPA…MYLC), 387 to 407 (LSLM…IVVL), 431 to 451 (VGFT…PLLL), 463 to 483 (FAVT…TLTP), 528 to 548 (LVGV…IAIP), 853 to 873 (LILI…LYES), 897 to 917 (LFNA…IGIV), 953 to 973 (PIMM…LSGG), and 984 to 1004 (ITIV…TPVV).

The protein belongs to the resistance-nodulation-cell division (RND) (TC 2.A.6) family. MdtC subfamily. As to quaternary structure, part of a tripartite efflux system composed of MdtA, MdtB and MdtC. MdtC forms a heteromultimer with MdtB.

Its subcellular location is the cell inner membrane. This chain is Multidrug resistance protein MdtC, found in Salmonella paratyphi A (strain ATCC 9150 / SARB42).